The chain runs to 74 residues: Protein RALF-like 25 (74 aa).

Positions 1 to 22 are cleaved as a signal peptide; sequence MKTFMIILLVICSILIVGRVEA. Intrachain disulfides connect C35-C44 and C62-C68.

This sequence belongs to the plant rapid alkalinization factor (RALF) family.

Its subcellular location is the secreted. Functionally, cell signaling peptide that may regulate plant stress, growth, and development. Mediates a rapid alkalinization of extracellular space by mediating a transient increase in the cytoplasmic Ca(2+) concentration leading to a calcium-dependent signaling events through a cell surface receptor and a concomitant activation of some intracellular mitogen-activated protein kinases. In Arabidopsis thaliana (Mouse-ear cress), this protein is Protein RALF-like 25 (RALFL25).